Consider the following 93-residue polypeptide: Acylphosphatase (93 aa).

The 87-residue stretch at 7–93 folds into the Acylphosphatase-like domain; it reads RAHVFVSGTV…EGIDGFHIRR (87 aa). Active-site residues include arginine 22 and asparagine 40.

This sequence belongs to the acylphosphatase family.

It carries out the reaction an acyl phosphate + H2O = a carboxylate + phosphate + H(+). The polypeptide is Acylphosphatase (acyP) (Haloquadratum walsbyi (strain DSM 16790 / HBSQ001)).